The chain runs to 460 residues: Oxysterols receptor LXR-beta (460 aa).

The segment covering 1-14 (MSSPTTSSLDTPLP) has biased composition (low complexity). The disordered stretch occupies residues 1–78 (MSSPTTSSLD…PERKRKKGPA (78 aa)). Residues 1–85 (MSSPTTSSLD…GPAPKMLGHE (85 aa)) form a transactivation AF-1; required for ligand-independent transactivation function region. Positions 36–45 (EPWPGGPDPD) are enriched in pro residues. A DNA-binding region (nuclear receptor) is located at residues 84-161 (HELCRVCGDK…AGMREQCVLS (78 aa)). NR C4-type zinc fingers lie at residues 87–107 (CRVC…CEGC) and 125–149 (CRGG…LRKC). Positions 169 to 216 (KIRKQQQESQSQSQSPVGPQGSSSSASGPGASPGGSEAGSQGSGEGEG) are disordered. Residues 175–198 (QESQSQSQSPVGPQGSSSSASGPG) are compositionally biased toward low complexity. Over residues 199-215 (ASPGGSEAGSQGSGEGE) the composition is skewed to gly residues. The interval 219–460 (LTAAQELMIQ…LLSEIWDVHE (242 aa)) is transactivation AF-2; required for ligand-dependent transactivation function; mediates interaction with CCAR2. Positions 222-460 (AQELMIQQLV…LLSEIWDVHE (239 aa)) constitute an NR LBD domain. Residues Lys-409 and Lys-447 each participate in a glycyl lysine isopeptide (Lys-Gly) (interchain with G-Cter in SUMO2) cross-link.

The protein belongs to the nuclear hormone receptor family. NR1 subfamily. As to quaternary structure, forms a heterodimer with RXR. Interacts with CCAR2 (via N-terminus) in a ligand-independent manner. Interacts (when sumoylated) with GPS2; interaction with GPS2 onto hepatic acute phase protein promoters prevents N-Cor corepressor complex dissociation. Interacts with ABCA12 and ABCA1; this interaction is required for ABCA1 localization to the cell surface and is necessary for its normal activity and stability. Post-translationally, sumoylated by SUMO2 at Lys-409 and Lys-447 during the hepatic acute phase response, leading to promote interaction with GPS2 and prevent N-Cor corepressor complex dissociation. In terms of tissue distribution, ubiquitous.

It is found in the nucleus. Functionally, nuclear receptor that exhibits a ligand-dependent transcriptional activation activity. Binds preferentially to double-stranded oligonucleotide direct repeats having the consensus half-site sequence 5'-AGGTCA-3' and 4-nt spacing (DR-4). Regulates cholesterol uptake through MYLIP-dependent ubiquitination of LDLR, VLDLR and LRP8; DLDLR and LRP8. Interplays functionally with RORA for the regulation of genes involved in liver metabolism. Induces LPCAT3-dependent phospholipid remodeling in endoplasmic reticulum (ER) membranes of hepatocytes, driving SREBF1 processing and lipogenesis. Via LPCAT3, triggers the incorporation of arachidonate into phosphatidylcholines of ER membranes, increasing membrane dynamics and enabling triacylglycerols transfer to nascent very low-density lipoprotein (VLDL) particles. Via LPCAT3 also counteracts lipid-induced ER stress response and inflammation, likely by modulating SRC kinase membrane compartmentalization and limiting the synthesis of lipid inflammatory mediators. Plays an anti-inflammatory role during the hepatic acute phase response by acting as a corepressor: inhibits the hepatic acute phase response by preventing dissociation of the N-Cor corepressor complex. This is Oxysterols receptor LXR-beta (NR1H2) from Homo sapiens (Human).